Reading from the N-terminus, the 218-residue chain is Guanylate kinase (218 aa).

The region spanning 14–193 (GVMLVLSSPS…AFASVRAIVS (180 aa)) is the Guanylate kinase-like domain. Residue 21-28 (SPSGAGKS) coordinates ATP.

The protein belongs to the guanylate kinase family.

The protein localises to the cytoplasm. The catalysed reaction is GMP + ATP = GDP + ADP. Its function is as follows. Essential for recycling GMP and indirectly, cGMP. This chain is Guanylate kinase, found in Chelativorans sp. (strain BNC1).